A 350-amino-acid chain; its full sequence is Transmembrane protein 185B (350 aa).

7 helical membrane-spanning segments follow: residues leucine 16–isoleucine 36, tryptophan 41–glycine 61, phenylalanine 81–valine 101, phenylalanine 111–valine 131, tryptophan 168–tyrosine 188, valine 211–leucine 231, and methionine 240–threonine 260.

This sequence belongs to the TMEM185 family.

The protein resides in the membrane. This chain is Transmembrane protein 185B (TMEM185B), found in Bos taurus (Bovine).